We begin with the raw amino-acid sequence, 222 residues long: Endonuclease V (222 aa).

The Mg(2+) site is built by Asp34 and Asp102.

The protein belongs to the endonuclease V family. The cofactor is Mg(2+).

It localises to the cytoplasm. It catalyses the reaction Endonucleolytic cleavage at apurinic or apyrimidinic sites to products with a 5'-phosphate.. Functionally, DNA repair enzyme involved in the repair of deaminated bases. Selectively cleaves double-stranded DNA at the second phosphodiester bond 3' to a deoxyinosine leaving behind the intact lesion on the nicked DNA. This Proteus mirabilis (strain HI4320) protein is Endonuclease V.